Reading from the N-terminus, the 258-residue chain is Cytosolic Fe-S cluster assembly factor Nubp2 homolog (258 aa).

Glycine 14–serine 21 contributes to the ATP binding site. 2 residues coordinate [4Fe-4S] cluster: cysteine 188 and cysteine 191.

The protein belongs to the Mrp/NBP35 ATP-binding proteins family. NUBP2/CFD1 subfamily. Heterotetramer of 2 Nubp1 and 2 Nubp2 chains. The cofactor is [4Fe-4S] cluster.

The protein localises to the cytoplasm. Component of the cytosolic iron-sulfur (Fe/S) protein assembly (CIA) machinery. Required for maturation of extramitochondrial Fe-S proteins. The Nubp1-Nubp2 heterotetramer forms a Fe-S scaffold complex, mediating the de novo assembly of an Fe-S cluster and its transfer to target apoproteins. The chain is Cytosolic Fe-S cluster assembly factor Nubp2 homolog from Drosophila pseudoobscura pseudoobscura (Fruit fly).